The primary structure comprises 141 residues: Nucleoside triphosphatase NudI (141 aa).

A Nudix hydrolase domain is found at 1 to 141 (MRQRTIVCPL…RKTLRLKGLL (141 aa)). Positions 38–59 (GGVESGERIEEALRREIREELG) match the Nudix box motif.

It belongs to the Nudix hydrolase family. NudI subfamily. As to quaternary structure, monomer. Mg(2+) serves as cofactor.

The catalysed reaction is a ribonucleoside 5'-triphosphate + H2O = a ribonucleoside 5'-phosphate + diphosphate + H(+). The enzyme catalyses a 2'-deoxyribonucleoside 5'-triphosphate + H2O = a 2'-deoxyribonucleoside 5'-phosphate + diphosphate + H(+). It catalyses the reaction dUTP + H2O = dUMP + diphosphate + H(+). It carries out the reaction dTTP + H2O = dTMP + diphosphate + H(+). The catalysed reaction is dCTP + H2O = dCMP + diphosphate + H(+). Functionally, catalyzes the hydrolysis of nucleoside triphosphates, with a preference for pyrimidine deoxynucleoside triphosphates (dUTP, dTTP and dCTP). This Shigella flexneri serotype 5b (strain 8401) protein is Nucleoside triphosphatase NudI.